Here is a 405-residue protein sequence, read N- to C-terminus: Imidazolonepropionase (405 aa).

Fe(3+)-binding residues include His-73 and His-75. 2 residues coordinate Zn(2+): His-73 and His-75. The 4-imidazolone-5-propanoate site is built by Arg-82, Tyr-145, and His-178. An N-formimidoyl-L-glutamate-binding site is contributed by Tyr-145. His-243 is a Fe(3+) binding site. His-243 contributes to the Zn(2+) binding site. Residue Gln-246 participates in 4-imidazolone-5-propanoate binding. Position 318 (Asp-318) interacts with Fe(3+). Asp-318 is a binding site for Zn(2+). 2 residues coordinate N-formimidoyl-L-glutamate: Asn-320 and Gly-322. Thr-323 lines the 4-imidazolone-5-propanoate pocket.

Belongs to the metallo-dependent hydrolases superfamily. HutI family. Zn(2+) serves as cofactor. Requires Fe(3+) as cofactor.

It is found in the cytoplasm. It catalyses the reaction 4-imidazolone-5-propanoate + H2O = N-formimidoyl-L-glutamate. It participates in amino-acid degradation; L-histidine degradation into L-glutamate; N-formimidoyl-L-glutamate from L-histidine: step 3/3. Functionally, catalyzes the hydrolytic cleavage of the carbon-nitrogen bond in imidazolone-5-propanoate to yield N-formimidoyl-L-glutamate. It is the third step in the universal histidine degradation pathway. This is Imidazolonepropionase from Brucella abortus (strain S19).